The primary structure comprises 103 residues: ATP synthase F(0) complex subunit g, mitochondrial (103 aa).

Position 2 is an N-acetylalanine (alanine 2). N6-acetyllysine is present on residues lysine 11, lysine 24, lysine 35, and lysine 54.

This sequence belongs to the ATPase g subunit family. As to quaternary structure, component of the ATP synthase complex composed at least of ATP5F1A/subunit alpha, ATP5F1B/subunit beta, ATP5MC1/subunit c (homooctomer), MT-ATP6/subunit a, MT-ATP8/subunit 8, ATP5ME/subunit e, ATP5MF/subunit f, ATP5MG/subunit g, ATP5MK/subunit k, ATP5MJ/subunit j, ATP5F1C/subunit gamma, ATP5F1D/subunit delta, ATP5F1E/subunit epsilon, ATP5PF/subunit F6, ATP5PB/subunit b, ATP5PD/subunit d, ATP5PO/subunit OSCP. ATP synthase complex consists of a soluble F(1) head domain (subunits alpha(3) and beta(3)) - the catalytic core - and a membrane F(0) domain - the membrane proton channel (subunits c, a, 8, e, f, g, k and j). These two domains are linked by a central stalk (subunits gamma, delta, and epsilon) rotating inside the F1 region and a stationary peripheral stalk (subunits F6, b, d, and OSCP).

The protein resides in the mitochondrion. The protein localises to the mitochondrion inner membrane. Subunit g, of the mitochondrial membrane ATP synthase complex (F(1)F(0) ATP synthase or Complex V) that produces ATP from ADP in the presence of a proton gradient across the membrane which is generated by electron transport complexes of the respiratory chain. ATP synthase complex consist of a soluble F(1) head domain - the catalytic core - and a membrane F(1) domain - the membrane proton channel. These two domains are linked by a central stalk rotating inside the F(1) region and a stationary peripheral stalk. During catalysis, ATP synthesis in the catalytic domain of F(1) is coupled via a rotary mechanism of the central stalk subunits to proton translocation. In vivo, can only synthesize ATP although its ATP hydrolase activity can be activated artificially in vitro. Part of the complex F(0) domain. This Mus musculus (Mouse) protein is ATP synthase F(0) complex subunit g, mitochondrial.